The primary structure comprises 273 residues: MPFSFFSRKKPSRRFNDFYEDWSKTLTENCLPLLRQSLSSAASASVLSSNVDLVLRHLVLYYETLDLAADHNTIPYLLFPSWRNSLETPFLFLGDIHPYLLTNLLRSFIDRENQDSDDEDEETSLDLVNQPLKMTMAWKDPSDELVKRIDQIECTMRLMVPGLMDRMRKTQRSFVARVSESWVSSYQVGKKKKLTATVATASTSVDEAAKIEMEELVSIFVDANRLRKSVIMDIVGATSEHQAALFLEGLCQFLAGFKDQILLQDFEILSLPN.

In terms of domain architecture, DOG1 spans 12–267 (SRRFNDFYED…KDQILLQDFE (256 aa)).

As to expression, expressed only in anthers and in pollen. Not detected in other flower tissues, stems, leaves and siliques.

The protein resides in the cytoplasm. Required for the formation of pollen surface apertures, which arise by restriction of exine deposition at specific sites. The aperture length depends on the INP1 dosage. Does not play a role in specifying the number or position of apertures. Acts in a sporophytic manner. This chain is Protein INAPERTURATE POLLEN1, found in Arabidopsis thaliana (Mouse-ear cress).